The following is a 434-amino-acid chain: Trigger factor (434 aa).

One can recognise a PPIase FKBP-type domain in the interval 161-246; sequence EDRATLDFTG…LKKVEVRELP (86 aa).

Belongs to the FKBP-type PPIase family. Tig subfamily.

It localises to the cytoplasm. The catalysed reaction is [protein]-peptidylproline (omega=180) = [protein]-peptidylproline (omega=0). Its function is as follows. Involved in protein export. Acts as a chaperone by maintaining the newly synthesized protein in an open conformation. Functions as a peptidyl-prolyl cis-trans isomerase. The protein is Trigger factor of Yersinia pseudotuberculosis serotype O:1b (strain IP 31758).